The sequence spans 158 residues: Small ribosomal subunit protein uS7 (158 aa).

This sequence belongs to the universal ribosomal protein uS7 family. As to quaternary structure, part of the 30S ribosomal subunit. Contacts proteins S9 and S11.

One of the primary rRNA binding proteins, it binds directly to 16S rRNA where it nucleates assembly of the head domain of the 30S subunit. Is located at the subunit interface close to the decoding center, probably blocks exit of the E-site tRNA. The sequence is that of Small ribosomal subunit protein uS7 from Parabacteroides distasonis (strain ATCC 8503 / DSM 20701 / CIP 104284 / JCM 5825 / NCTC 11152).